The following is a 51-amino-acid chain: Ribosome biogenesis protein Nop10 (51 aa).

The protein belongs to the NOP10 family.

Involved in ribosome biogenesis; more specifically in 18S rRNA pseudouridylation and in cleavage of pre-rRNA. The polypeptide is Ribosome biogenesis protein Nop10 (Methanococcus aeolicus (strain ATCC BAA-1280 / DSM 17508 / OCM 812 / Nankai-3)).